The primary structure comprises 457 residues: Siroheme synthase (457 aa).

Residues 1–204 (MDHLPIFCQL…QDQQAVEETT (204 aa)) form a precorrin-2 dehydrogenase /sirohydrochlorin ferrochelatase region. Residues 22-23 (DV) and 43-44 (LA) contribute to the NAD(+) site. At Ser128 the chain carries Phosphoserine. The uroporphyrinogen-III C-methyltransferase stretch occupies residues 216 to 457 (GEVVLVGAGP…REKLNWFSNH (242 aa)). Residue Pro225 participates in S-adenosyl-L-methionine binding. Residue Asp248 is the Proton acceptor of the active site. Lys270 acts as the Proton donor in catalysis. Residues 301 to 303 (GGD), Ile306, 331 to 332 (TA), Met382, and Gly411 each bind S-adenosyl-L-methionine.

The protein in the N-terminal section; belongs to the precorrin-2 dehydrogenase / sirohydrochlorin ferrochelatase family. This sequence in the C-terminal section; belongs to the precorrin methyltransferase family.

The catalysed reaction is uroporphyrinogen III + 2 S-adenosyl-L-methionine = precorrin-2 + 2 S-adenosyl-L-homocysteine + H(+). It carries out the reaction precorrin-2 + NAD(+) = sirohydrochlorin + NADH + 2 H(+). It catalyses the reaction siroheme + 2 H(+) = sirohydrochlorin + Fe(2+). It participates in cofactor biosynthesis; adenosylcobalamin biosynthesis; precorrin-2 from uroporphyrinogen III: step 1/1. It functions in the pathway cofactor biosynthesis; adenosylcobalamin biosynthesis; sirohydrochlorin from precorrin-2: step 1/1. The protein operates within porphyrin-containing compound metabolism; siroheme biosynthesis; precorrin-2 from uroporphyrinogen III: step 1/1. Its pathway is porphyrin-containing compound metabolism; siroheme biosynthesis; siroheme from sirohydrochlorin: step 1/1. It participates in porphyrin-containing compound metabolism; siroheme biosynthesis; sirohydrochlorin from precorrin-2: step 1/1. Functionally, multifunctional enzyme that catalyzes the SAM-dependent methylations of uroporphyrinogen III at position C-2 and C-7 to form precorrin-2 via precorrin-1. Then it catalyzes the NAD-dependent ring dehydrogenation of precorrin-2 to yield sirohydrochlorin. Finally, it catalyzes the ferrochelation of sirohydrochlorin to yield siroheme. The polypeptide is Siroheme synthase (Enterobacter sp. (strain 638)).